The sequence spans 385 residues: T-box transcription factor TBX10 (385 aa).

The T-box DNA-binding region spans 69-252 (LEMKPLWEEF…SNPFAKGFRE (184 aa)). 2 disordered regions span residues 283-310 (GSAE…NQLL) and 328-359 (QNLY…AGDQ). The span at 293–307 (KASASSSRTPTQPHN) shows a compositional bias: polar residues. Residues 331-347 (YPGSPSRAGPPRARLAP) are compositionally biased toward low complexity.

The protein localises to the nucleus. Probable transcriptional regulator involved in developmental processes. The sequence is that of T-box transcription factor TBX10 (Tbx10) from Mus musculus (Mouse).